Consider the following 348-residue polypeptide: Phosphoribosylformylglycinamidine cyclo-ligase (348 aa).

The protein belongs to the AIR synthase family.

The protein localises to the cytoplasm. It carries out the reaction 2-formamido-N(1)-(5-O-phospho-beta-D-ribosyl)acetamidine + ATP = 5-amino-1-(5-phospho-beta-D-ribosyl)imidazole + ADP + phosphate + H(+). It functions in the pathway purine metabolism; IMP biosynthesis via de novo pathway; 5-amino-1-(5-phospho-D-ribosyl)imidazole from N(2)-formyl-N(1)-(5-phospho-D-ribosyl)glycinamide: step 2/2. The polypeptide is Phosphoribosylformylglycinamidine cyclo-ligase (Cereibacter sphaeroides (strain ATCC 17025 / ATH 2.4.3) (Rhodobacter sphaeroides)).